Here is a 639-residue protein sequence, read N- to C-terminus: ADP-ribosylation factor-binding protein GGA1 (639 aa).

The residue at position 1 (Met1) is an N-acetylmethionine. Residues 17-147 form the VHS domain; the sequence is ATNPLNKELD…MLKKQGIVKS (131 aa). Residues 114 to 274 are interaction with ARF3; that stretch reads KILELLYSWT…RLASDTEDND (161 aa). The GAT domain maps to 171 to 299; it reads DEEKSKMLAR…VINLYKQLVR (129 aa). A Phosphoserine modification is found at Ser185. The tract at residues 300–509 is unstructured hinge; the sequence is GEEVNGDATA…ITVPLESIKP (210 aa). Disordered stretches follow at residues 320 to 421 and 434 to 492; these read LDLS…SGLD and SLPP…QPVP. Ser355 is subject to Phosphoserine; by CK2. Residues 358–362 carry the Autoinhibitory motif; the sequence is DDELM. Polar residues predominate over residues 381–390; it reads GWNSFQSSDA. The residue at position 418 (Ser418) is a Phosphoserine. The span at 462–480 shows a compositional bias: low complexity; the sequence is SSSCSSPSSSATSLLHTVS. The span at 481–490 shows a compositional bias: pro residues; it reads PEPPRPPQQP. In terms of domain architecture, GAE spans 510–631; the sequence is SNILPVTVYD…NEMGDVDQFP (122 aa).

This sequence belongs to the GGA protein family. In terms of assembly, monomer. Interacts with GGA2 and GGA3. Binds to clathrin and activated ARFs, including ARF1, ARF5 and ARF6. Interacts with RABEP1. Interacts with RABGEF1. Interacts with the type-I membrane proteins LRP3, M6PR/CD-MPR and IGF2R/CI-MPR. Interacts (via N-terminal VHS domain) with SORL1/sorLA and SORT1 (via C-terminal cytosolic domain). Interacts with EPN4. Interacts with CCDC91. Interacts with HEATR5B/p200a. Interacts with SYNRG/gamma-synergin. Interacts (via GAE doamin) with NECAP1 and NECAP2. Interacts (via GAE domain) with AFTPH/aftiphilin. Interacts with TSG101 and UBC. Interacts with RNF11. Interacts (via VHS domain) with BACE1 (via DXXLL motif); the interaction highly increases when BACE1 is phosphorylated at 'Ser-498'. Interacts with CNST. Interacts with ADRA2B. Interacts with ARL3; the interaction recruits, in collaboration with RABEP1, PKD1:PKD2 complex to trans-Golgi network and is required for ciliary targeting. Phosphorylated by CK2 and dephosphorylated by PP2A. Phosphorylation of GGA1 allows the internal DXXLL motif to bind the VHS domain and to inhibit the recognition of cargo signals. Post-translationally, ubiquitinated. As to expression, ubiquitously expressed.

The protein localises to the golgi apparatus. It is found in the trans-Golgi network membrane. It localises to the endosome membrane. Its subcellular location is the early endosome membrane. In terms of biological role, plays a role in protein sorting and trafficking between the trans-Golgi network (TGN) and endosomes. Mediates the ARF-dependent recruitment of clathrin to the TGN and binds ubiquitinated proteins and membrane cargo molecules with a cytosolic acidic cluster-dileucine (DXXLL) motif. Mediates export of the GPCR receptor ADRA2B to the cell surface. Required for targeting PKD1:PKD2 complex from the trans-Golgi network to the cilium membrane. Regulates retrograde transport of proteins such as phosphorylated form of BACE1 from endosomes to the trans-Golgi network. This is ADP-ribosylation factor-binding protein GGA1 (GGA1) from Homo sapiens (Human).